A 233-amino-acid chain; its full sequence is MAVVSLSEMMEAGAHFGHQTRRWNPKMSKYIYCARNGVHIIDLVKTALCMNNAYKWTRNAAKGGKRFLFVGTKKQASDVVAQEATRCGAAYVNQRWLGGMLTNWTTMKARIERLKDLERMESSGSIAMRPKKEAAVLRRELERLQKYLGGLKGMRRLPDVVVLVDQRRETNAVLEARKLDISLVSMLDTNCDPDLCEVPIPCNDDAVRSVQLILGRLADAINEGRKASNNEKN.

Belongs to the universal ribosomal protein uS2 family.

The sequence is that of Small ribosomal subunit protein uS2 from Prochlorococcus marinus (strain MIT 9312).